Reading from the N-terminus, the 63-residue chain is MGMRMMFTVFLLVVLATTVVSFTSYRASDGRNAAAKASDLIALTVRDCCSRPPCRWSHPELCS.

The first 21 residues, 1–21 (MGMRMMFTVFLLVVLATTVVS), serve as a signal peptide directing secretion. The propeptide occupies 22-46 (FTSYRASDGRNAAAKASDLIALTVR). Residues 50–52 (SRP) form a ser-Xaa-Pro motif, crucial for potent interaction with nAChR region.

This sequence belongs to the conotoxin A superfamily. Is not hydroxylated. Post-translationally, contains 2 disulfide bonds. Expressed by the venom duct.

It is found in the secreted. Its function is as follows. Alpha-conotoxins act on postsynaptic membranes, they bind to the nicotinic acetylcholine receptors (nAChR) and thus inhibit them. The polypeptide is Alpha-conotoxin-like Am1.6 (Conus amadis (Amadis cone)).